Here is a 423-residue protein sequence, read N- to C-terminus: Protein SOSEKI 5 (423 aa).

The tract at residues 1–33 is disordered; sequence MSSRVFRATPDNNYLVPRRSKDQQDTSPDRNRI. Over residues 19 to 33 the composition is skewed to basic and acidic residues; it reads RSKDQQDTSPDRNRI. The tract at residues 45-136 is DIX-like oligomerization domain; it reads RKVPVVYYLC…YVLKGSEVLD (92 aa). Disordered regions lie at residues 150–172 and 196–258; these read SSFRDPRSLNPDKNSGDDIPAVI and SSAE…SPET. A compositionally biased stretch (polar residues) spans 196–211; that stretch reads SSAESTQRLAADASTQ. 2 short sequence motifs (association to cell membranes) span residues 233–234 and 303–304; these read AS and CG. The tract at residues 379-423 is disordered; it reads SSSYNADRCSRMGPTTEKDEEEAVRAKCIPRKPKPVAKRNNGGQQ. Positions 406 to 415 are enriched in basic residues; it reads CIPRKPKPVA.

Belongs to the SOSEKI family. As to quaternary structure, homodimer. Forms long polymer filaments with other SOKs proteins polymers (e.g. SOK1, SOK2, SOK3 and SOK4) crucial for polar localization and biological activity. Binds to ANGUSTIFOLIA (AN). As to expression, expressed during embryogenesis and in roots.

It localises to the cell membrane. SOSEKI proteins (SOK1-5) locally interpret global polarity cues and can influence cell division orientation to coordinate cell polarization relative to body axes. This Arabidopsis thaliana (Mouse-ear cress) protein is Protein SOSEKI 5.